Consider the following 151-residue polypeptide: Arginine repressor (151 aa).

Belongs to the ArgR family.

The protein resides in the cytoplasm. The protein operates within amino-acid biosynthesis; L-arginine biosynthesis [regulation]. Regulates arginine biosynthesis genes. The chain is Arginine repressor from Enterococcus faecalis (strain ATCC 700802 / V583).